The primary structure comprises 353 residues: Methylthioribose-1-phosphate isomerase (353 aa).

Substrate is bound by residues R51–A53, R94, and Q199. D240 acts as the Proton donor in catalysis. N250 to K251 contributes to the substrate binding site.

Belongs to the eIF-2B alpha/beta/delta subunits family. MtnA subfamily. In terms of assembly, homodimer.

The enzyme catalyses 5-(methylsulfanyl)-alpha-D-ribose 1-phosphate = 5-(methylsulfanyl)-D-ribulose 1-phosphate. The protein operates within amino-acid biosynthesis; L-methionine biosynthesis via salvage pathway; L-methionine from S-methyl-5-thio-alpha-D-ribose 1-phosphate: step 1/6. In terms of biological role, catalyzes the interconversion of methylthioribose-1-phosphate (MTR-1-P) into methylthioribulose-1-phosphate (MTRu-1-P). In Bacillus licheniformis (strain ATCC 14580 / DSM 13 / JCM 2505 / CCUG 7422 / NBRC 12200 / NCIMB 9375 / NCTC 10341 / NRRL NRS-1264 / Gibson 46), this protein is Methylthioribose-1-phosphate isomerase.